A 188-amino-acid chain; its full sequence is Peptidyl-tRNA hydrolase (188 aa).

Tyr-14 contacts tRNA. His-19 functions as the Proton acceptor in the catalytic mechanism. Positions 64, 66, and 112 each coordinate tRNA.

Belongs to the PTH family. Monomer.

Its subcellular location is the cytoplasm. The catalysed reaction is an N-acyl-L-alpha-aminoacyl-tRNA + H2O = an N-acyl-L-amino acid + a tRNA + H(+). Its function is as follows. Hydrolyzes ribosome-free peptidyl-tRNAs (with 1 or more amino acids incorporated), which drop off the ribosome during protein synthesis, or as a result of ribosome stalling. Catalyzes the release of premature peptidyl moieties from peptidyl-tRNA molecules trapped in stalled 50S ribosomal subunits, and thus maintains levels of free tRNAs and 50S ribosomes. The protein is Peptidyl-tRNA hydrolase of Bacillus pumilus (strain SAFR-032).